The sequence spans 313 residues: Pantothenate synthetase (313 aa).

Residue 43–50 (MGALHEGH) coordinates ATP. His50 serves as the catalytic Proton donor. Gln75 lines the (R)-pantoate pocket. Gln75 lines the beta-alanine pocket. 161–164 (GEKD) provides a ligand contact to ATP. Gln167 is a binding site for (R)-pantoate. ATP contacts are provided by residues Val190 and 198–201 (LSSR).

This sequence belongs to the pantothenate synthetase family. Homodimer.

It is found in the cytoplasm. The catalysed reaction is (R)-pantoate + beta-alanine + ATP = (R)-pantothenate + AMP + diphosphate + H(+). Its pathway is cofactor biosynthesis; (R)-pantothenate biosynthesis; (R)-pantothenate from (R)-pantoate and beta-alanine: step 1/1. In terms of biological role, catalyzes the condensation of pantoate with beta-alanine in an ATP-dependent reaction via a pantoyl-adenylate intermediate. The protein is Pantothenate synthetase of Mycobacterium sp. (strain JLS).